A 286-amino-acid chain; its full sequence is Pyridoxal kinase PdxY (286 aa).

Residues serine 9 and 44–45 (TQ) contribute to the substrate site. ATP contacts are provided by aspartate 111, glutamate 148, and lysine 181. Aspartate 222 contacts substrate.

This sequence belongs to the pyridoxine kinase family. PdxY subfamily. As to quaternary structure, homodimer. It depends on Mg(2+) as a cofactor.

The enzyme catalyses pyridoxal + ATP = pyridoxal 5'-phosphate + ADP + H(+). Its pathway is cofactor metabolism; pyridoxal 5'-phosphate salvage; pyridoxal 5'-phosphate from pyridoxal: step 1/1. Pyridoxal kinase involved in the salvage pathway of pyridoxal 5'-phosphate (PLP). Catalyzes the phosphorylation of pyridoxal to PLP. This chain is Pyridoxal kinase PdxY, found in Actinobacillus pleuropneumoniae serotype 5b (strain L20).